We begin with the raw amino-acid sequence, 95 residues long: Aspartyl/glutamyl-tRNA(Asn/Gln) amidotransferase subunit C (95 aa).

Belongs to the GatC family. Heterotrimer of A, B and C subunits.

It catalyses the reaction L-glutamyl-tRNA(Gln) + L-glutamine + ATP + H2O = L-glutaminyl-tRNA(Gln) + L-glutamate + ADP + phosphate + H(+). It carries out the reaction L-aspartyl-tRNA(Asn) + L-glutamine + ATP + H2O = L-asparaginyl-tRNA(Asn) + L-glutamate + ADP + phosphate + 2 H(+). Its function is as follows. Allows the formation of correctly charged Asn-tRNA(Asn) or Gln-tRNA(Gln) through the transamidation of misacylated Asp-tRNA(Asn) or Glu-tRNA(Gln) in organisms which lack either or both of asparaginyl-tRNA or glutaminyl-tRNA synthetases. The reaction takes place in the presence of glutamine and ATP through an activated phospho-Asp-tRNA(Asn) or phospho-Glu-tRNA(Gln). This Chromohalobacter salexigens (strain ATCC BAA-138 / DSM 3043 / CIP 106854 / NCIMB 13768 / 1H11) protein is Aspartyl/glutamyl-tRNA(Asn/Gln) amidotransferase subunit C.